The following is a 1939-amino-acid chain: Myosin-6 (1939 aa).

One can recognise a Myosin N-terminal SH3-like domain in the interval 32–81; that stretch reads DIRTECFVPDDKEEFVKAKILSREGGKVIAETENGKTVTVKEDQVLQQNP. One can recognise a Myosin motor domain in the interval 85-780; it reads DKIEDMAMLT…LLGLLEEMRD (696 aa). An N6,N6,N6-trimethyllysine modification is found at K129. 178-185 contacts ATP; sequence GESGAGKT. T379 bears the Phosphothreonine mark. The residue at position 417 (S417) is a Phosphoserine. 2 actin-binding regions span residues 657 to 679 and 759 to 773; these read LNKL…IPNE and KFGH…GLLG. Residues 783–812 enclose the IQ domain; the sequence is LSRIITRMQAQARGQLMRIEFKKIVERRDA. Residues 842 to 1939 adopt a coiled-coil conformation; sequence LKSAETEKEM…GAKQKMHDEE (1098 aa). S1139 carries the phosphoserine modification. Y1261 is subject to Phosphotyrosine. Phosphoserine is present on S1271. Phosphothreonine occurs at positions 1277 and 1284. S1309 is modified (phosphoserine). Phosphotyrosine is present on Y1310. At T1311 the chain carries Phosphothreonine. Phosphoserine is present on S1512. T1515 carries the post-translational modification Phosphothreonine. Basic and acidic residues-rich tracts occupy residues 1826-1837 and 1925-1939; these read GELEAEQKRNAE and KSRD…HDEE. Disordered regions lie at residues 1826 to 1849 and 1909 to 1939; these read GELE…ERRI and EERA…HDEE.

It belongs to the TRAFAC class myosin-kinesin ATPase superfamily. Myosin family. Muscle myosin is a hexameric protein that consists of 2 heavy chain subunits (MHC), 2 alkali light chain subunits (MLC) and 2 regulatory light chain subunits (MLC-2).

The protein resides in the cytoplasm. It is found in the myofibril. Functionally, muscle contraction. In Homo sapiens (Human), this protein is Myosin-6 (MYH6).